Consider the following 553-residue polypeptide: MQVEGPDTNFVSDLALGSKKRRLSKTSVQEDDHTNVVSEVNKNKKKKKAKPMTCTLLKSVVEKGIGIKDVRDMTQYLLQAENNSPKWIDICNRSSLQKMIVLFIPGLQPDDFENGKNTFNEISDDNFKYIPGEIASTFHTFPVMAPGSKMTLFSPYNSFINVGLSKMEKINKLKELQKKKKITINDLVLSEQQLVANDYPLDSGDTNFDTDWVQTVDFTHGGSHIFALDCEMCLSEQGLVLTRISLVNFDNEVIYEELVKPDVPIVDYLTRYSGITEEKLTVGAKKTLREVQKDLLKIISRSDILIGHSLQNDLKVMKLKHPLVVDTAIIYHHKAGDPFKPSLKYLSETFLNKSIQNGEHDSVEDARACLELTKLKILNGLAFGIGINTENLFTKLHRFEVKTVLLNDMIIKNHTEDDSKGQLIRCVEDDETWTHIHENLNKDVKLIVGRIKNLERSRNYNKKPRKETPSFDASMVLHDIGQHLTQLYENATPGTMILIMSGTGDTRPWNNLSTELEFIQDKKERLDKRREREPEIVEAIKLARGGVASFTVK.

Residue S24 is modified to Phosphoserine. The stretch at 167-194 (MEKINKLKELQKKKKITINDLVLSEQQL) forms a coiled coil. Residues 225 to 373 (IFALDCEMCL…EDARACLELT (149 aa)) form the Exonuclease domain. Residues 509–533 (WNNLSTELEFIQDKKERLDKRRERE) adopt a coiled-coil conformation.

Belongs to the REXO1/REXO3 family.

The protein resides in the nucleus. In terms of biological role, 3' exoribonuclease required for 5S rRNA maturation and for the proper maturation of the 5' cistron of the tRNA-Arg3 dicistronic gene. Involved with REX2 in the maturation of the 5.8S rRNA, and with REX2 and REX3, in the 3' processing of the U5L snRNA. The protein is RNA exonuclease 1 (RNH70) of Saccharomyces cerevisiae (strain ATCC 204508 / S288c) (Baker's yeast).